A 612-amino-acid polypeptide reads, in one-letter code: C4-dicarboxylate transport sensor protein DctB (612 aa).

Helical transmembrane passes span S23–E43 and V292–L312. Positions K328–L376 form a coiled coil. The region spanning S385 to V599 is the Histidine kinase domain. H388 bears the Phosphohistidine; by autocatalysis mark.

Post-translationally, autophosphorylated.

It is found in the cell inner membrane. It catalyses the reaction ATP + protein L-histidine = ADP + protein N-phospho-L-histidine.. Its function is as follows. Member of the two-component regulatory system DctB/DctD, which regulates C4-dicarboxylate transport via regulation of expression of the dctPQM operon and dctA. DctB functions as a membrane-associated protein kinase that phosphorylates DctD in response to environmental signals. This chain is C4-dicarboxylate transport sensor protein DctB, found in Pseudomonas aeruginosa (strain ATCC 15692 / DSM 22644 / CIP 104116 / JCM 14847 / LMG 12228 / 1C / PRS 101 / PAO1).